The following is a 122-amino-acid chain: Large ribosomal subunit protein bL17 (122 aa).

It belongs to the bacterial ribosomal protein bL17 family. In terms of assembly, part of the 50S ribosomal subunit. Contacts protein L32.

The sequence is that of Large ribosomal subunit protein bL17 from Neisseria meningitidis serogroup C / serotype 2a (strain ATCC 700532 / DSM 15464 / FAM18).